The sequence spans 410 residues: MVLSQRQRDELNRAIADYLRSNGYEEAYSVFKKEAELDVNEELDKKYAGLLEKKWTSVIRLQKKVMELESKLNEAKEEFTSGGPLGQKRDPKEWIPRPPEKYALSGHRSPVTRVIFHPVFSVMVSASEDATIKVWDYETGDFERTLKGHTDSVQDISFDHTGKLLASCSADMTIKLWDFQGFECIRTMHGHDHNVSSVAIMPNGDHIVSASRDKTIKMWEVQTGYCVKTFTGHREWVRMVRPNQDGTLIASCSNDQTVRVWVVATKECKAELREHEHVVECISWAPESSYSTISEATGSETKKSGKPGPFLLSGSRDKTIKMWDISTGMCLMTLVGHDNWVRGVLFHSGGKFILSCADDKTLRVWDFKNKRCMKTLNAHEHFVTSLDFHKTAPYVVTGSVDQTVKVWECR.

A LisH domain is found at 7–39; the sequence is QRDELNRAIADYLRSNGYEEAYSVFKKEAELDV. The stretch at 56 to 82 forms a coiled coil; the sequence is TSVIRLQKKVMELESKLNEAKEEFTSG. 7 WD repeats span residues 106 to 147, 148 to 187, 190 to 229, 232 to 271, 274 to 333, 336 to 377, and 378 to 410; these read GHRS…RTLK, GHTD…CIRT, GHDH…CVKT, GHRE…CKAE, EHEH…CLMT, GHDN…KTLN, and AHEH…WECR.

Belongs to the WD repeat LIS1/nudF family. Can self-associate. Component of the cytosolic PAF-AH (I) heterotetrameric enzyme, which is composed of PAFAH1B1 (beta), PAFAH1B2 (alpha2) and PAFAH1B3 (alpha1) subunits. The catalytic activity of the enzyme resides in the alpha1 (PAFAH1B3) and alpha2 (PAFAH1B2) subunits, whereas the beta subunit (PAFAH1B1) has regulatory activity. Trimer formation is not essential for the catalytic activity. Interacts with dynein, dynactin, NDE1 and NDEL1.

The protein localises to the cytoplasm. Its subcellular location is the cytoskeleton. It localises to the microtubule organizing center. It is found in the centrosome. Its function is as follows. Regulatory subunit (beta subunit) of the cytosolic type I platelet-activating factor (PAF) acetylhydrolase (PAF-AH (I)), an enzyme that catalyzes the hydrolyze of the acetyl group at the sn-2 position of PAF and its analogs and participates in PAF inactivation. Regulates the PAF-AH (I) activity in a catalytic dimer composition-dependent manner. Positively regulates the activity of the minus-end directed microtubule motor protein dynein. May enhance dynein-mediated microtubule sliding by targeting dynein to the microtubule plus end. Required for several dynein- and microtubule-dependent processes such as the maintenance of Golgi integrity, the peripheral transport of microtubule fragments and the coupling of the nucleus and centrosome. May be required for proliferation of neuronal precursors and neuronal migration. The sequence is that of Lissencephaly-1 homolog from Gallus gallus (Chicken).